We begin with the raw amino-acid sequence, 331 residues long: GTPase Obg (331 aa).

One can recognise an Obg domain in the interval 1–159; that stretch reads MHFIDEVKIY…MWIHLRLKLL (159 aa). Residues 160–327 form the OBG-type G domain; it reads SDVGLIGLPN…IVKLALEIIK (168 aa). GTP-binding positions include 166 to 173, 191 to 195, 212 to 215, 279 to 282, and 308 to 310; these read GLPNAGKS, FTTLV, DIPG, NKCD, and STY. 2 residues coordinate Mg(2+): serine 173 and threonine 193.

The protein belongs to the TRAFAC class OBG-HflX-like GTPase superfamily. OBG GTPase family. In terms of assembly, monomer. Requires Mg(2+) as cofactor.

It is found in the cytoplasm. Its function is as follows. An essential GTPase which binds GTP, GDP and possibly (p)ppGpp with moderate affinity, with high nucleotide exchange rates and a fairly low GTP hydrolysis rate. Plays a role in control of the cell cycle, stress response, ribosome biogenesis and in those bacteria that undergo differentiation, in morphogenesis control. This is GTPase Obg from Rickettsia prowazekii (strain Madrid E).